The chain runs to 353 residues: Photosystem II protein D1 (353 aa).

The next 3 helical transmembrane spans lie at 29–46 (YVGW…TATI), 118–133 (HFLI…EWEL), and 142–156 (WICV…AATA). Chlorophyll a is bound at residue histidine 118. Tyrosine 126 is a pheophytin a binding site. [CaMn4O5] cluster-binding residues include aspartate 170 and glutamate 189. A helical transmembrane segment spans residues 197 to 218 (FHMLGVAGVFGGSLFSAMHGSL). Histidine 198 serves as a coordination point for chlorophyll a. A quinone is bound by residues histidine 215 and 264-265 (SF). Fe cation is bound at residue histidine 215. Histidine 272 contributes to the Fe cation binding site. Residues 274 to 288 (FLAAWPVVGIWFTSL) form a helical membrane-spanning segment. Residues histidine 332, glutamate 333, aspartate 342, and alanine 344 each contribute to the [CaMn4O5] cluster site. Positions 345–353 (AVKAPSIIG) are excised as a propeptide.

This sequence belongs to the reaction center PufL/M/PsbA/D family. PSII is composed of 1 copy each of membrane proteins PsbA, PsbB, PsbC, PsbD, PsbE, PsbF, PsbH, PsbI, PsbJ, PsbK, PsbL, PsbM, PsbT, PsbX, PsbY, PsbZ, Psb30/Ycf12, peripheral proteins PsbO, CyanoQ (PsbQ), PsbU, PsbV and a large number of cofactors. It forms dimeric complexes. Requires The D1/D2 heterodimer binds P680, chlorophylls that are the primary electron donor of PSII, and subsequent electron acceptors. It shares a non-heme iron and each subunit binds pheophytin, quinone, additional chlorophylls, carotenoids and lipids. D1 provides most of the ligands for the Mn4-Ca-O5 cluster of the oxygen-evolving complex (OEC). There is also a Cl(-1) ion associated with D1 and D2, which is required for oxygen evolution. The PSII complex binds additional chlorophylls, carotenoids and specific lipids. as cofactor. In terms of processing, tyr-161 forms a radical intermediate that is referred to as redox-active TyrZ, YZ or Y-Z. Post-translationally, C-terminally processed by CtpA; processing is essential to allow assembly of the oxygen-evolving complex and thus photosynthetic growth.

It is found in the cellular thylakoid membrane. It catalyses the reaction 2 a plastoquinone + 4 hnu + 2 H2O = 2 a plastoquinol + O2. Photosystem II (PSII) is a light-driven water:plastoquinone oxidoreductase that uses light energy to abstract electrons from H(2)O, generating O(2) and a proton gradient subsequently used for ATP formation. It consists of a core antenna complex that captures photons, and an electron transfer chain that converts photonic excitation into a charge separation. The D1/D2 (PsbA/PsbD) reaction center heterodimer binds P680, the primary electron donor of PSII as well as several subsequent electron acceptors. The protein is Photosystem II protein D1 of Prochlorothrix hollandica.